The primary structure comprises 425 residues: Serine--tRNA ligase (425 aa).

230–232 serves as a coordination point for L-serine; that stretch reads TAE. Residue 261–263 coordinates ATP; it reads RSE. An L-serine-binding site is contributed by Glu-284. An ATP-binding site is contributed by 348–351; the sequence is EISS. Ser-384 is an L-serine binding site.

The protein belongs to the class-II aminoacyl-tRNA synthetase family. Type-1 seryl-tRNA synthetase subfamily. Homodimer. The tRNA molecule binds across the dimer.

Its subcellular location is the cytoplasm. It catalyses the reaction tRNA(Ser) + L-serine + ATP = L-seryl-tRNA(Ser) + AMP + diphosphate + H(+). The catalysed reaction is tRNA(Sec) + L-serine + ATP = L-seryl-tRNA(Sec) + AMP + diphosphate + H(+). The protein operates within aminoacyl-tRNA biosynthesis; selenocysteinyl-tRNA(Sec) biosynthesis; L-seryl-tRNA(Sec) from L-serine and tRNA(Sec): step 1/1. Functionally, catalyzes the attachment of serine to tRNA(Ser). Is also able to aminoacylate tRNA(Sec) with serine, to form the misacylated tRNA L-seryl-tRNA(Sec), which will be further converted into selenocysteinyl-tRNA(Sec). The protein is Serine--tRNA ligase of Streptococcus equi subsp. equi (strain 4047).